Here is a 591-residue protein sequence, read N- to C-terminus: Glutathione S-transferase T2 (591 aa).

In terms of domain architecture, GST N-terminal spans 1 to 82 (MKLKVYADRM…YLSSAYASVV (82 aa)). Residues 11–12 (SQ), 40–41 (QL), 53–54 (KV), and 66–67 (ES) each bind glutathione. Residues 89–226 (DLSKRAKIHS…EVLFRAKDRF (138 aa)) enclose the GST C-terminal domain. A disordered region spans residues 229-272 (QREMATASKPGPQSKIIQFSSIGGTSDGPNLVQDTTDRKARRRK). Over residues 243–262 (KIIQFSSIGGTSDGPNLVQD) the composition is skewed to polar residues. Positions 265–338 (DRKARRRKWS…HCRQRWRKIN (74 aa)) constitute a Myb-like domain.

The protein belongs to the GST superfamily. Theta family.

It localises to the peroxisome. The enzyme catalyses RX + glutathione = an S-substituted glutathione + a halide anion + H(+). Functionally, may be involved in the conjugation of reduced glutathione to a wide number of exogenous and endogenous hydrophobic electrophiles and have a detoxification role against certain herbicides. This is Glutathione S-transferase T2 (GSTT2) from Arabidopsis thaliana (Mouse-ear cress).